The primary structure comprises 503 residues: Lysine--tRNA ligase (503 aa).

Residues glutamate 412 and glutamate 419 each contribute to the Mg(2+) site.

It belongs to the class-II aminoacyl-tRNA synthetase family. In terms of assembly, homodimer. Mg(2+) serves as cofactor.

Its subcellular location is the cytoplasm. The enzyme catalyses tRNA(Lys) + L-lysine + ATP = L-lysyl-tRNA(Lys) + AMP + diphosphate. This is Lysine--tRNA ligase from Buchnera aphidicola subsp. Schizaphis graminum (strain Sg).